The chain runs to 230 residues: Large ribosomal subunit protein uL1 (230 aa).

It belongs to the universal ribosomal protein uL1 family. In terms of assembly, part of the 50S ribosomal subunit.

Functionally, binds directly to 23S rRNA. The L1 stalk is quite mobile in the ribosome, and is involved in E site tRNA release. Protein L1 is also a translational repressor protein, it controls the translation of the L11 operon by binding to its mRNA. The sequence is that of Large ribosomal subunit protein uL1 from Leptospira biflexa serovar Patoc (strain Patoc 1 / Ames).